A 553-amino-acid polypeptide reads, in one-letter code: MEEKILPIALRNAIKYNGKANPKAVLGIFLSENPEYRSKAKEVMPIVEKVVEEVNKLSLDEIKKKLEELGEDVKKKEKKEKGLELPNVKDKVVMRFAPNPSGPLHIGHARAAVLNDYFVKKYGGKLILRLEDTDPKRVLPEAYDMIKEDLDWLGVKVDEVVIQSDRIELYYEYGRKLIEMGHAYVCDCNPEEFRELRNKGVPCKCRDRAIEDNLELWEKMLNGELENVAVRLKTDIKHKNPSIRDFPIFRVEKTPHPRTGDKYCVYPLMNFSVPVDDHLLGMTHVLRGKDHIVNTEKQAYIYKYFGWEMPEFIHYGILKIEDIVLSTSSMYKGIKEGLYSGWDDVRLGTLRALRRRGIKPEAIYEIMKRIGIKQADVKFSWENLYAINKELIDKDARRFFFVWNPKKLIIEGAEKKVLKLRMHPDRPEFGERELIFDGEVYVVGDELEENKMYRLMELFNIVVEKVDDIALAKYHSDDFKIARKNKAKIIHWIPVKDSVKVKVLMPDGEIKEGFAEKDFAKVEVDDIIQFERFGFVRIDKKDNDGFVCCYAHR.

The short motif at 98-108 (PNPSGPLHIGH) is the 'HIGH' region element.

Belongs to the class-I aminoacyl-tRNA synthetase family. Glutamate--tRNA ligase type 2 subfamily.

It localises to the cytoplasm. The enzyme catalyses tRNA(Glu) + L-glutamate + ATP = L-glutamyl-tRNA(Glu) + AMP + diphosphate. In terms of biological role, catalyzes the attachment of glutamate to tRNA(Glu) in a two-step reaction: glutamate is first activated by ATP to form Glu-AMP and then transferred to the acceptor end of tRNA(Glu). This chain is Glutamate--tRNA ligase, found in Methanocaldococcus jannaschii (strain ATCC 43067 / DSM 2661 / JAL-1 / JCM 10045 / NBRC 100440) (Methanococcus jannaschii).